The chain runs to 416 residues: Serine/threonine-protein kinase 26 (416 aa).

Residue alanine 2 is modified to N-acetylalanine. Serine 4 is modified (phosphoserine). Residues 24 to 274 (FTKLERIGKG…AKELLKHKFI (251 aa)) form the Protein kinase domain. Residues 30-38 (IGKGSFGEV) and lysine 53 each bind ATP. Aspartate 144 serves as the catalytic Proton acceptor. Threonine 178 carries the post-translational modification Phosphothreonine; by autocatalysis. The tract at residues 297 to 340 (EGHSDDESDSEGSDSESTSRENNTHPEWSFTTVRKKPDPKKVQN) is disordered. 5 positions are modified to phosphoserine: serine 300, serine 304, serine 306, serine 309, and serine 325. 2 positions are modified to phosphothreonine: threonine 327 and threonine 328.

The protein belongs to the protein kinase superfamily. STE Ser/Thr protein kinase family. STE20 subfamily. In terms of assembly, homodimer. Interacts with PDCD10. Interacts with GOLGA2. Interacts with CTTNBP2NL. Interacts with RIPOR1 (via C-terminus); this interaction occurs in a PDCD10-dependent and Rho-independent manner. Interacts with PDCD10; this interaction is required for the association of STK26 with RIPOR1. Part of the core of STRIPAK complexes composed of PP2A catalytic and scaffolding subunits, the striatins (PP2A regulatory subunits), the striatin-associated proteins MOB4, STRIP1 and STRIP2, PDCD10 and members of the STE20 kinases, such as STK24 and STK26. Mg(2+) is required as a cofactor.

It localises to the cytoplasm. Its subcellular location is the golgi apparatus. The catalysed reaction is L-seryl-[protein] + ATP = O-phospho-L-seryl-[protein] + ADP + H(+). It catalyses the reaction L-threonyl-[protein] + ATP = O-phospho-L-threonyl-[protein] + ADP + H(+). With respect to regulation, interaction with Golgi matrix protein GOLGA2 leads to autophosphorylation on Thr-178, possibly as a consequence of stabilization of dimer formation. May also be activated by C-terminal cleavage. In terms of biological role, serine/threonine-protein kinase that acts as a mediator of cell growth. Modulates apoptosis. In association with STK24 negatively regulates Golgi reorientation in polarized cell migration upon RHO activation. Phosphorylates ATG4B at 'Ser-383', thereby increasing autophagic flux. Part of the striatin-interacting phosphatase and kinase (STRIPAK) complexes. STRIPAK complexes have critical roles in protein (de)phosphorylation and are regulators of multiple signaling pathways including Hippo, MAPK, nuclear receptor and cytoskeleton remodeling. Different types of STRIPAK complexes are involved in a variety of biological processes such as cell growth, differentiation, apoptosis, metabolism and immune regulation. The protein is Serine/threonine-protein kinase 26 of Homo sapiens (Human).